Reading from the N-terminus, the 393-residue chain is S-adenosylmethionine synthase 2 (393 aa).

A Mg(2+)-binding site is contributed by Glu9. Residue His15 coordinates ATP. Position 43 (Glu43) interacts with K(+). Positions 56 and 99 each coordinate L-methionine. ATP is bound by residues Asp167–Lys169, Ser235–Phe238, Asp246, Arg252–Lys253, Ala269, Lys273, and Lys277. Residue Asp246 coordinates L-methionine. Lys277 contacts L-methionine.

Belongs to the AdoMet synthase family. As to quaternary structure, homotetramer. Mn(2+) is required as a cofactor. The cofactor is Mg(2+). It depends on Co(2+) as a cofactor. K(+) serves as cofactor. As to expression, mostly expressed in flowers, seedpods and roots, and, to a lower extent, in stems and leaves.

It is found in the cytoplasm. It carries out the reaction L-methionine + ATP + H2O = S-adenosyl-L-methionine + phosphate + diphosphate. It participates in amino-acid biosynthesis; S-adenosyl-L-methionine biosynthesis; S-adenosyl-L-methionine from L-methionine: step 1/1. In terms of biological role, catalyzes the formation of S-adenosylmethionine from methionine and ATP. The reaction comprises two steps that are both catalyzed by the same enzyme: formation of S-adenosylmethionine (AdoMet) and triphosphate, and subsequent hydrolysis of the triphosphate. This is S-adenosylmethionine synthase 2 (MSAMS2) from Brassica juncea (Indian mustard).